The primary structure comprises 162 residues: Probable chemoreceptor glutamine deamidase CheD (162 aa).

The protein belongs to the CheD family.

It catalyses the reaction L-glutaminyl-[protein] + H2O = L-glutamyl-[protein] + NH4(+). Its function is as follows. Probably deamidates glutamine residues to glutamate on methyl-accepting chemotaxis receptors (MCPs), playing an important role in chemotaxis. The chain is Probable chemoreceptor glutamine deamidase CheD from Syntrophotalea carbinolica (strain DSM 2380 / NBRC 103641 / GraBd1) (Pelobacter carbinolicus).